Reading from the N-terminus, the 487-residue chain is Glutamyl-tRNA(Gln) amidotransferase subunit A (487 aa).

Residues Lys-78 and Ser-153 each act as charge relay system in the active site. The active-site Acyl-ester intermediate is the Ser-177.

It belongs to the amidase family. GatA subfamily. In terms of assembly, heterotrimer of A, B and C subunits.

The enzyme catalyses L-glutamyl-tRNA(Gln) + L-glutamine + ATP + H2O = L-glutaminyl-tRNA(Gln) + L-glutamate + ADP + phosphate + H(+). Allows the formation of correctly charged Gln-tRNA(Gln) through the transamidation of misacylated Glu-tRNA(Gln) in organisms which lack glutaminyl-tRNA synthetase. The reaction takes place in the presence of glutamine and ATP through an activated gamma-phospho-Glu-tRNA(Gln). The chain is Glutamyl-tRNA(Gln) amidotransferase subunit A from Oenococcus oeni (strain ATCC BAA-331 / PSU-1).